The sequence spans 152 residues: 3-hydroxyacyl-[acyl-carrier-protein] dehydratase FabZ (152 aa).

Residue H57 is part of the active site.

The protein belongs to the thioester dehydratase family. FabZ subfamily.

It localises to the cytoplasm. The catalysed reaction is a (3R)-hydroxyacyl-[ACP] = a (2E)-enoyl-[ACP] + H2O. Involved in unsaturated fatty acids biosynthesis. Catalyzes the dehydration of short chain beta-hydroxyacyl-ACPs and long chain saturated and unsaturated beta-hydroxyacyl-ACPs. In Bradyrhizobium sp. (strain ORS 278), this protein is 3-hydroxyacyl-[acyl-carrier-protein] dehydratase FabZ.